We begin with the raw amino-acid sequence, 216 residues long: Probable GTP-binding protein EngB (216 aa).

An EngB-type G domain is found at 30 to 204; the sequence is SGLEVAFAGR…QMVLAGWLDL (175 aa). GTP is bound by residues 38 to 45, 64 to 68, 82 to 85, 149 to 152, and 182 to 185; these read GRSNAGKS, GRTQL, DLPG, TKAD, and LFSA. Residues Ser-45 and Thr-66 each contribute to the Mg(2+) site.

This sequence belongs to the TRAFAC class TrmE-Era-EngA-EngB-Septin-like GTPase superfamily. EngB GTPase family. Requires Mg(2+) as cofactor.

In terms of biological role, necessary for normal cell division and for the maintenance of normal septation. In Ectopseudomonas mendocina (strain ymp) (Pseudomonas mendocina), this protein is Probable GTP-binding protein EngB.